Here is a 477-residue protein sequence, read N- to C-terminus: Interferon gamma receptor 1 (477 aa).

Residues 1-25 (MGPQAAAGRMILLVVLMLSAKVGSG) form the signal peptide. The Extracellular segment spans residues 26 to 254 (ALTSTEDPEP…PPFHDDRKDS (229 aa)). Residues Asn-61 and Asn-85 are each glycosylated (N-linked (GlcNAc...) asparagine). 4 disulfides stabilise this stretch: Cys-83/Cys-91, Cys-128/Cys-174, Cys-203/Cys-208, and Cys-222/Cys-243. Residues 255-275 (IWILVVAPLTVFTVVILVFAY) form a helical membrane-spanning segment. Topologically, residues 276–477 (WYTKKNSFKR…RLTGEAQELS (202 aa)) are cytoplasmic. 2 disordered regions span residues 335–386 (TVTA…LSSN) and 402–446 (SDSG…SGYD). Ser-362 carries the post-translational modification Phosphoserine. Phosphothreonine is present on Thr-367. Ser-370 carries the post-translational modification Phosphoserine. Residues Thr-373 and Thr-375 each carry the phosphothreonine modification. Residues 375-386 (TQRRSFSLLSSN) show a composition bias toward polar residues. Phosphoserine is present on residues Ser-379 and Ser-402. Positions 402–416 (SDSGLVGSGSSISDL) are enriched in low complexity. Tyr-445 is subject to Phosphotyrosine.

Belongs to the type II cytokine receptor family. Monomer. Heterodimer with IFNGR2, to form the IFNG receptor complex. Interacts with JAK1. Interacts (when phosphorylated) with STAT1. Interacts with SOCS1. Post-translationally, phosphorylated at Ser/Thr residues. Phosphorylation of Tyr-445 is required for IFNG receptor signal transduction. Influenza virus infection leads to phosphorylation in a CSNK1A1-dependent manner. In terms of processing, ubiquitinated after phosphorylation in a CSNK1A1-dependent manner, leading to the lysosome-dependent degradation. Proteasomally degraded through 'Lys-48'-mediated ubiquitination. Ubiquitination is necessary for efficient IFNGR1 signaling.

It localises to the cell membrane. Functionally, receptor subunit for interferon gamma/INFG that plays crucial roles in antimicrobial, antiviral, and antitumor responses by activating effector immune cells and enhancing antigen presentation (, PubMed:20926559, PubMed:27286456). Associates with transmembrane accessory factor IFNGR2 to form a functional receptor. Upon ligand binding, the intracellular domain of IFNGR1 opens out to allow association of downstream signaling components JAK1 and JAK2. In turn, activated JAK1 phosphorylates IFNGR1 to form a docking site for STAT1. Subsequent phosphorylation of STAT1 leads to its dimerization, translocation to the nucleus, and stimulation of target gene transcription. STAT3 can also be activated in a similar manner although activation seems weaker. IFNGR1 intracellular domain phosphorylation also provides a docking site for SOCS1 that regulates the JAK-STAT pathway by competing with STAT1 binding to IFNGR1. The protein is Interferon gamma receptor 1 of Mus musculus (Mouse).